The primary structure comprises 227 residues: UPF0173 metal-dependent hydrolase BCQ_4418 (227 aa).

Belongs to the UPF0173 family.

This chain is UPF0173 metal-dependent hydrolase BCQ_4418, found in Bacillus cereus (strain Q1).